The sequence spans 549 residues: Glucose-6-phosphate isomerase (549 aa).

Residues Lys80, Lys228, and Lys234 each carry the N6-acetyllysine modification. Residue Glu355 is the Proton donor of the active site. Residues His386 and Lys514 contribute to the active site.

Belongs to the GPI family.

It is found in the cytoplasm. The enzyme catalyses alpha-D-glucose 6-phosphate = beta-D-fructose 6-phosphate. It participates in carbohydrate biosynthesis; gluconeogenesis. Its pathway is carbohydrate degradation; glycolysis; D-glyceraldehyde 3-phosphate and glycerone phosphate from D-glucose: step 2/4. Its function is as follows. Catalyzes the reversible isomerization of glucose-6-phosphate to fructose-6-phosphate. The chain is Glucose-6-phosphate isomerase from Shigella flexneri.